The sequence spans 373 residues: Putative F-box/kelch-repeat protein At3g19410 (373 aa).

Residues 1–46 (MTIPELPKDLIEEILCYVPATYLKRLRSTCKGWNRLFKDDRRFAKK) enclose the F-box domain. Kelch repeat units lie at residues 101–148 (RIFH…FVLG), 149–200 (YYQE…QCVS), and 329–373 (KLYI…EEKS).

This is Putative F-box/kelch-repeat protein At3g19410 from Arabidopsis thaliana (Mouse-ear cress).